Here is a 329-residue protein sequence, read N- to C-terminus: Minor capsid protein A1 (329 aa).

Its subcellular location is the virion. In terms of biological role, minor capsid protein. This Escherichia coli (Bacteriophage Q-beta) protein is Minor capsid protein A1.